A 261-amino-acid polypeptide reads, in one-letter code: Undecaprenyl-diphosphatase (261 aa).

Transmembrane regions (helical) follow at residues 1–21 (MNYI…FLPV), 41–61 (FTKL…VVLY), 69–89 (LDFY…GLLF), 95–115 (ALLE…IILL), 129–149 (ITYL…IPGV), 169–186 (AAEF…GATL), 206–226 (ILII…KTFI), and 241–261 (RIVA…LTLI).

Belongs to the UppP family.

It localises to the cell inner membrane. It catalyses the reaction di-trans,octa-cis-undecaprenyl diphosphate + H2O = di-trans,octa-cis-undecaprenyl phosphate + phosphate + H(+). Its function is as follows. Catalyzes the dephosphorylation of undecaprenyl diphosphate (UPP). Confers resistance to bacitracin. This chain is Undecaprenyl-diphosphatase, found in Flavobacterium psychrophilum (strain ATCC 49511 / DSM 21280 / CIP 103535 / JIP02/86).